Here is a 108-residue protein sequence, read N- to C-terminus: Anti-sigma-B factor antagonist (108 aa).

The STAS domain maps to leucine 3–glutamate 108. Position 57 is a phosphoserine (serine 57).

This sequence belongs to the anti-sigma-factor antagonist family. Post-translationally, phosphorylated by RsbW on a serine residue.

In terms of biological role, positive regulator of sigma-B activity. Non-phosphorylated RsbV binds to RsbW, preventing its association with sigma-B. When phosphorylated, releases RsbW, which is then free to complex with and inactivate sigma-B. This chain is Anti-sigma-B factor antagonist (rsbV), found in Staphylococcus aureus (strain NCTC 8325 / PS 47).